Here is a 237-residue protein sequence, read N- to C-terminus: uncharacterized protein (237 aa).

Residues methionine 1 to glycine 25 constitute a signal peptide (tat-type signal). A disordered region spans residues isoleucine 201–proline 237.

Exported by the Tat system. The position of the signal peptide cleavage has not been experimentally proven. Can also be exported by the Sec system.

This is an uncharacterized protein from Escherichia coli (strain K12).